Here is a 225-residue protein sequence, read N- to C-terminus: MRSSKNVIKEFMRFKVRMEGTVNGHEFEIEGEGEGRPYEGHNTVKLKVTKGGPLPFAWDILSPQFQYGSKVYVKHPADIPDYKKLSFPEGFKWERVMNFEDGGVVTVTQDSSLQDGCFIYKVKFIGVNFPSDGPVMQKKTMGWEASTERLYPRDGVLKGEIHKALKLKDGGHYLVEFKSIYMAKKPVQLPGYYYVDSKLDITSHNEDYTIVEQYERTEGRHHLFL.

Positions 66–68 form a cross-link, 2-iminomethyl-5-imidazolinone (Gln-Gly); the sequence is QYG. A (Z)-2,3-didehydrotyrosine modification is found at Y67.

It belongs to the GFP family. Homotetramer. Post-translationally, contains a chromophore consisting of modified amino acid residues. The chromophore is formed by autocatalytic backbone condensation between Xaa-N and Gly-(N+2), oxidation of Tyr-(N+1) to didehydrotyrosine, and formation of a double bond to the alpha-amino nitrogen of residue Xaa-N. Maturation of the chromophore requires nothing other than molecular oxygen.

Its function is as follows. Thought to play a role in photoprotection of the coral's resident symbiont microalgae's photosystems from photoinhibition caused by high light levels found near the surface of coral reefs. In deeper water, the fluorescence may be to convert blue light into longer wavelengths more suitable for use in photosynthesis by the microalgal symbionts. This Discosoma sp. (Sea anemone) protein is Red fluorescent protein drFP583.